The sequence spans 109 residues: Nucleoid-associated protein CC_0268 (109 aa).

Belongs to the YbaB/EbfC family. In terms of assembly, homodimer.

It localises to the cytoplasm. The protein localises to the nucleoid. Functionally, binds to DNA and alters its conformation. May be involved in regulation of gene expression, nucleoid organization and DNA protection. The polypeptide is Nucleoid-associated protein CC_0268 (Caulobacter vibrioides (strain ATCC 19089 / CIP 103742 / CB 15) (Caulobacter crescentus)).